A 523-amino-acid polypeptide reads, in one-letter code: 2-oxopropyl-CoM reductase, carboxylating (523 aa).

53-54 (AA) lines the FAD pocket. 2-oxopropyl-coenzyme M is bound at residue arginine 56. Serine 81 provides a ligand contact to FAD. 2-oxopropyl-coenzyme M is bound at residue cysteine 82. Cysteine 82 and cysteine 87 form a disulfide bridge. An FAD-binding site is contributed by alanine 158. NADP(+) contacts are provided by residues 222–225 (GSKT) and 245–246 (RT). FAD is bound at residue aspartate 353. Glutamate 360 serves as a coordination point for NADP(+). An FAD-binding site is contributed by methionine 361. Residue arginine 365 coordinates 2-oxopropyl-coenzyme M. Phenylalanine 501 is a binding site for FAD.

Belongs to the class-I pyridine nucleotide-disulfide oxidoreductase family. As to quaternary structure, homodimer. Component II of the aliphatic epoxide carboxylation complex together with components I, III and IV. Requires FAD as cofactor.

The catalysed reaction is coenzyme M + acetoacetate + NADP(+) = 2-oxopropyl-coenzyme M + CO2 + NADPH. Its pathway is alkene metabolism; propylene degradation. Its activity is regulated as follows. Inhibited (at 40%) by the coenzyme M analog 2-bromoethanesulfonate (BES). BES is a time-dependent inactivator of dithiothreitol-reduced 2-KPCC, where the redox active cysteines are in the free thiol forms. BES does not inactivate air-oxidized 2-KPCC, where the redox active cysteine pair is in the disulfide form. BES specifically alkylates the interchange thiol that facilitates thioether bond cleavage and enolacetone formation during catalysis. Involved in aliphatic epoxide carboxylation. Catalyzes the reductive cleavage of the thioether bond of 2-oxopropyl-coenzyme M (2-KPC), and the subsequent carboxylation of the ketopropyl cleavage product, yielding the products acetoacetate and free coenzyme M. In Xanthobacter autotrophicus (strain ATCC BAA-1158 / Py2), this protein is 2-oxopropyl-CoM reductase, carboxylating.